Reading from the N-terminus, the 546-residue chain is NRAMP-like transporter smf-2 (546 aa).

At 1 to 42 (MPGFQNANISDLAPPAREKTFDDTIAVKIPEDEKNTWFSWRK) the chain is on the cytoplasmic side. Residues 43-63 (LWAFTGPGFLMSIAYLDPGNI) form a helical membrane-spanning segment. The Extracellular portion of the chain corresponds to 64-70 (ESDLQAG). The helical transmembrane segment at 71-91 (AQAEYKLLWVLLVSHIVGMLL) threads the bilayer. The Cytoplasmic segment spans residues 92-119 (QRMSARLGVVSGKHMAEIAYDYYPLVPR). Residues 120 to 140 (IILWLMIEIAIVCSDMQEVIG) form a helical membrane-spanning segment. Topologically, residues 141–152 (TAIAIYLLSSGK) are extracellular. Residues 153-173 (IPLLVGVLITILDTFTFLFID) traverse the membrane as a helical segment. Residues 174–181 (RYGIRKLE) lie on the Cytoplasmic side of the membrane. A helical transmembrane segment spans residues 182 to 202 (FIFVALISTMAISFGYEFVVM). Residues 203–228 (KPVLTKVLTGTVVPWCSGCGKEEIIT) lie on the Extracellular side of the membrane. A helical transmembrane segment spans residues 229–249 (AISIFGAVIMPHNFYLHSALV). The Cytoplasmic portion of the chain corresponds to 250-270 (KSRKVDRSSKTRIAEANKYFS). Residues 271–291 (IESAFALSVSFFINLFVLSVF) traverse the membrane as a helical segment. The Extracellular segment spans residues 292–334 (ARGLYQKTNGDVNSMCLSHNDIPDSNVFPNNTSSVTVDLFQGG). Asn-321 carries N-linked (GlcNAc...) asparagine glycosylation. The chain crosses the membrane as a helical span at residues 335-355 (IYLGCQFGLFAMIIWAIGIFA). At 356–386 (AGQSSTMTGTYTGQFVMEGFVRISWPKWKRV) the chain is on the cytoplasmic side. A helical transmembrane segment spans residues 387-407 (LITRAVAITPTLILCIKAHGI). The Extracellular segment spans residues 408–415 (KNLTGMND). An N-linked (GlcNAc...) asparagine glycan is attached at Asn-409. The chain crosses the membrane as a helical span at residues 416-436 (FLNCVQMVQLPFALIPMITFT). At 437–453 (SSKRIMHNFRTSKPLQY) the chain is on the cytoplasmic side. A helical transmembrane segment spans residues 454–474 (FSIICGIITIGINVYFIFQYV). Over 475–483 (TENFGTGWL) the chain is Extracellular. The helical transmembrane segment at 484-504 (IFVIIGPFTLLYIAFILYLAI) threads the bilayer. Topologically, residues 505 to 546 (YCLVACELMNDTVNLPGFDFHRTLELDAPWITETFVVNDVYF) are cytoplasmic.

Belongs to the NRAMP family. Expressed in dopaminergic neurons (at protein level). Primarily expressed in mc1, mc2 and mc3 epithelial cells of the pharynx and vpil-6 pharyngeal-intestinal valve cells displaying an anterior-posterior expression gradient. Expressed in gonad sheath cells.

It is found in the apical cell membrane. Its subcellular location is the cytoplasmic vesicle membrane. Probable divalent metal ion transporter which regulates Mn(2+) uptake. The sequence is that of NRAMP-like transporter smf-2 from Caenorhabditis elegans.